The sequence spans 157 residues: Siroheme decarboxylase NirG subunit (157 aa).

It belongs to the Ahb/Nir family. In terms of assembly, forms a complex composed of NirDL, NirG and NirH. All proteins are required for the total conversion of siroheme to didecarboxysiroheme.

The catalysed reaction is siroheme + 2 H(+) = 12,18-didecarboxysiroheme + 2 CO2. It functions in the pathway porphyrin-containing compound metabolism. Functionally, involved in heme d1 biosynthesis. Catalyzes the decarboxylation of siroheme into didecarboxysiroheme. Siroheme is probably decarboxylated to monodecarboxysiroheme, which is in turn decarboxylated to didecarboxysiroheme. The polypeptide is Siroheme decarboxylase NirG subunit (Paracoccus pantotrophus (Thiosphaera pantotropha)).